A 206-amino-acid chain; its full sequence is Ras-related protein RABH1a (206 aa).

14–21 serves as a coordination point for GTP; it reads GDQGVGKT. Residues 36–44 carry the Effector region motif; that stretch reads YQATIGIDF. GTP is bound by residues 62–66, 120–123, and 150–151; these read DTAGQ, NKTD, and SA. Residues Cys204 and Cys206 are each lipidated (S-geranylgeranyl cysteine). Residue Cys206 is modified to Cysteine methyl ester.

This sequence belongs to the small GTPase superfamily. Rab family.

It localises to the golgi apparatus membrane. In terms of biological role, protein transport. Regulator of membrane traffic from the Golgi apparatus towards the endoplasmic reticulum (ER). This Arabidopsis thaliana (Mouse-ear cress) protein is Ras-related protein RABH1a (RABH1A).